The sequence spans 659 residues: PAN2-PAN3 deadenylation complex subunit PAN3 (659 aa).

Disordered stretches follow at residues 1–26 (MASAGKPALDDSRRGTGSPKMKAREN) and 103–132 (PKAANAAPFQPRSVASRSNTSTPNSRQENI). The segment at 26–55 (NAKDTLCRNVTIYGRCRYEDKGCAFNHDPL) adopts a C3H1-type zinc-finger fold. Polar residues predominate over residues 115-132 (SVASRSNTSTPNSRQENI). A pseudokinase domain region spans residues 262–522 (QTLPNTQLPA…NIDIFITGIS (261 aa)). Residues Arg-314, 363–370 (DYYPLSKT), and 422–423 (SK) each bind ATP. Residues 523–561 (SQLMSTFDSALHLDDQLTSDLSRELENGRLVRLMTKLNL) are a coiled coil. Residues 562 to 659 (VNERPEYEHD…ALLKPARRMH (98 aa)) form a knob domain region.

It belongs to the protein kinase superfamily. PAN3 family. As to quaternary structure, homodimer. Forms a heterotrimer with a catalytic subunit pan2 to form the poly(A)-nuclease (PAN) deadenylation complex. Interacts (via PAM-2 motif) with poly(A)-binding protein pab1 (via PABC domain), conferring substrate specificity of the enzyme complex.

The protein resides in the cytoplasm. Its function is as follows. Regulatory subunit of the poly(A)-nuclease (PAN) deadenylation complex, one of two cytoplasmic mRNA deadenylases involved in mRNA turnover. PAN specifically shortens poly(A) tails of RNA and the activity is stimulated by poly(A)-binding protein pab1. PAN deadenylation is followed by rapid degradation of the shortened mRNA tails by the CCR4-NOT complex. Deadenylated mRNAs are then degraded by two alternative mechanisms, namely exosome-mediated 3'-5' exonucleolytic degradation, or deadenylation-dependent mRNA decaping and subsequent 5'-3' exonucleolytic degradation by xrn1. May also be involved in post-transcriptional maturation of mRNA poly(A) tails. pan3 acts as a positive regulator for PAN activity, recruiting the catalytic subunit pan2 to mRNA via its interaction with RNA and with pab1. This chain is PAN2-PAN3 deadenylation complex subunit PAN3, found in Aspergillus clavatus (strain ATCC 1007 / CBS 513.65 / DSM 816 / NCTC 3887 / NRRL 1 / QM 1276 / 107).